The primary structure comprises 465 residues: GTPase Der (465 aa).

EngA-type G domains are found at residues 3–167 (PLVA…PERS) and 179–352 (IHIA…VSAL). GTP contacts are provided by residues 9 to 16 (GRPNVGKS), 57 to 61 (DTGGM), 119 to 122 (NKID), 185 to 192 (GRPNVGKS), 232 to 236 (DTAGL), and 297 to 300 (NKWD). The KH-like domain maps to 353–437 (RQFSTSEVNK…PVRFLFREGD (85 aa)).

The protein belongs to the TRAFAC class TrmE-Era-EngA-EngB-Septin-like GTPase superfamily. EngA (Der) GTPase family. In terms of assembly, associates with the 50S ribosomal subunit.

In terms of biological role, GTPase that plays an essential role in the late steps of ribosome biogenesis. This is GTPase Der from Xylella fastidiosa (strain M12).